We begin with the raw amino-acid sequence, 163 residues long: uncharacterized protein (163 aa).

Belongs to the IMPDH/GMPR family.

This is an uncharacterized protein from Haemophilus influenzae (strain ATCC 51907 / DSM 11121 / KW20 / Rd).